The following is a 290-amino-acid chain: Putative speedy protein-like protein 3 (290 aa).

Residues 16 to 50 are disordered; it reads GVDPSPPCRSLGWKRKKEWSDESEEEPEKELAPEP. Residues 36–50 are compositionally biased toward acidic residues; that stretch reads DESEEEPEKELAPEP.

Belongs to the Speedy/Ringo family.

The polypeptide is Putative speedy protein-like protein 3 (Homo sapiens (Human)).